The chain runs to 355 residues: Beta-porphyranase C (355 aa).

Residues 1 to 18 (MIKTLKRIPLVFLIAIMA) form the signal peptide. Cysteine 19 carries the N-palmitoyl cysteine lipid modification. Cysteine 19 is lipidated: S-diacylglycerol cysteine. A disordered region spans residues 22 to 72 (SGDNGKDKVEEQEQAQEQGEKKGQGEERDKEDGIDGLQPTFLADQDPKPDD). A compositionally biased stretch (basic and acidic residues) spans 39 to 54 (QGEKKGQGEERDKEDG). The GH16 domain maps to 71 to 355 (DDKKWIKVEG…WVRVWQLEDL (285 aa)). Residues tryptophan 110, glutamate 208, and glutamate 213 each contribute to the substrate site. The active-site Nucleophile is glutamate 208. Glutamate 213 (proton donor) is an active-site residue.

This sequence belongs to the glycosyl hydrolase 16 family.

It is found in the cell outer membrane. It carries out the reaction Hydrolysis of beta-D-galactopyranose-(1-&gt;4)-alpha-L-galactopyranose-6-sulfate linkages in porphyran.. Functionally, cleaves the sulfated polysaccharide porphyran at the (1-&gt;4) linkages between beta-D-galactopyranose and alpha-L-galactopyranose-6-sulfate, forming mostly the disaccharide alpha-L-galactopyranose-6-sulfate-(1-&gt;3)-beta-D-galactose. The polypeptide is Beta-porphyranase C (porC) (Zobellia galactanivorans (strain DSM 12802 / CCUG 47099 / CIP 106680 / NCIMB 13871 / Dsij)).